Consider the following 57-residue polypeptide: Potassium channel toxin KTx1 (57 aa).

A signal peptide spans 1–13; sequence FLVLLLVSLMCYA. A propeptide spanning residues 14–18 is cleaved from the precursor; it reads EIAEG. Disulfide bonds link C24–C37, C30–C42, and C36–C51.

The protein belongs to the scorpion calcin-like family. KTX subfamily. As to expression, expressed by the venom gland.

It is found in the secreted. Its function is as follows. This recombinant peptide inhibits voltage-gated potassium channels mKv1.3/KCNA3 (IC(50)=1.70 uM), mKv1.1/KCNA1 (10 uM inhibits 40% of currents) and hKv1.2/KCNA2 (10 uM inhibits 42% of currents). May also increase intracellular calcium release through the activation of nuclear inositol 1,4,5-trisphosphate receptors (ITPR) of cardiomyocytes, thereby causing an increase in the contraction frequency of these cells. The protein is Potassium channel toxin KTx1 of Isometrus maculatus (Lesser brown scorpion).